We begin with the raw amino-acid sequence, 257 residues long: 3-deoxy-manno-octulosonate cytidylyltransferase (257 aa).

It belongs to the KdsB family.

It localises to the cytoplasm. It catalyses the reaction 3-deoxy-alpha-D-manno-oct-2-ulosonate + CTP = CMP-3-deoxy-beta-D-manno-octulosonate + diphosphate. The protein operates within nucleotide-sugar biosynthesis; CMP-3-deoxy-D-manno-octulosonate biosynthesis; CMP-3-deoxy-D-manno-octulosonate from 3-deoxy-D-manno-octulosonate and CTP: step 1/1. Its pathway is bacterial outer membrane biogenesis; lipopolysaccharide biosynthesis. In terms of biological role, activates KDO (a required 8-carbon sugar) for incorporation into bacterial lipopolysaccharide in Gram-negative bacteria. The protein is 3-deoxy-manno-octulosonate cytidylyltransferase of Albidiferax ferrireducens (strain ATCC BAA-621 / DSM 15236 / T118) (Rhodoferax ferrireducens).